A 254-amino-acid chain; its full sequence is Phosphoribosylaminoimidazole-succinocarboxamide synthase (254 aa).

It belongs to the SAICAR synthetase family.

It catalyses the reaction 5-amino-1-(5-phospho-D-ribosyl)imidazole-4-carboxylate + L-aspartate + ATP = (2S)-2-[5-amino-1-(5-phospho-beta-D-ribosyl)imidazole-4-carboxamido]succinate + ADP + phosphate + 2 H(+). The protein operates within purine metabolism; IMP biosynthesis via de novo pathway; 5-amino-1-(5-phospho-D-ribosyl)imidazole-4-carboxamide from 5-amino-1-(5-phospho-D-ribosyl)imidazole-4-carboxylate: step 1/2. This is Phosphoribosylaminoimidazole-succinocarboxamide synthase from Bartonella henselae (strain ATCC 49882 / DSM 28221 / CCUG 30454 / Houston 1) (Rochalimaea henselae).